Consider the following 90-residue polypeptide: Small ribosomal subunit protein bS20 (90 aa).

The protein belongs to the bacterial ribosomal protein bS20 family.

Functionally, binds directly to 16S ribosomal RNA. The chain is Small ribosomal subunit protein bS20 from Rickettsia canadensis (strain McKiel).